The sequence spans 122 residues: Large ribosomal subunit protein uL14 (122 aa).

Belongs to the universal ribosomal protein uL14 family. As to quaternary structure, part of the 50S ribosomal subunit. Forms a cluster with proteins L3 and L19. In the 70S ribosome, L14 and L19 interact and together make contacts with the 16S rRNA in bridges B5 and B8.

Functionally, binds to 23S rRNA. Forms part of two intersubunit bridges in the 70S ribosome. In Solibacter usitatus (strain Ellin6076), this protein is Large ribosomal subunit protein uL14.